Here is a 321-residue protein sequence, read N- to C-terminus: tRNA uridine(34) hydroxylase (321 aa).

The Rhodanese domain maps to 123–217 (SDPDVTVIDT…YLEEVPEGNS (95 aa)). The active-site Cysteine persulfide intermediate is Cys177. The segment covering 294-308 (RKGELHIGDRADIAK) has biased composition (basic and acidic residues). The interval 294–321 (RKGELHIGDRADIAKSRTTQGAPSADGE) is disordered.

Belongs to the TrhO family.

The enzyme catalyses uridine(34) in tRNA + AH2 + O2 = 5-hydroxyuridine(34) in tRNA + A + H2O. Functionally, catalyzes oxygen-dependent 5-hydroxyuridine (ho5U) modification at position 34 in tRNAs. The chain is tRNA uridine(34) hydroxylase from Teredinibacter turnerae (strain ATCC 39867 / T7901).